The chain runs to 651 residues: Cytoplasmic tyrosine-protein kinase BMX (651 aa).

The region spanning 4–111 (KSILEELLLK…WLKALQKEIR (108 aa)) is the PH domain. The Btk-type zinc finger occupies 113 to 149 (NPHLLIKYHSGFFVDGKFLCCQQSCKAAPGCTLWEAY). Zn(2+)-binding residues include His121, Cys132, Cys133, and Cys143. Residues 272–368 (WFAGNISRSQ…GMITRLRHPV (97 aa)) form the SH2 domain. Positions 393 to 646 (ITLLKELGNG…QLLSAIEPLR (254 aa)) constitute a Protein kinase domain. ATP-binding positions include 399–407 (LGNGQFGVV) and Lys421. The active-site Proton acceptor is Asp512. Position 542 is a phosphotyrosine; by SRC and autocatalysis (Tyr542).

The protein belongs to the protein kinase superfamily. Tyr protein kinase family. TEC subfamily. In terms of assembly, interacts with BCAR1, CAV1, MYD88, PTK2/FAK1, RUFY1, RUFY2, STAT3, TIRAP and TNFRSF1B. Zn(2+) is required as a cofactor. In terms of processing, phosphorylated in response to protein I/II and to LPS. Phosphorylation at Tyr-542 by SRC and by autocatalysis leads to activation and is required for STAT3 phosphorylation by BMX. In terms of tissue distribution, specifically expressed in the endocardium of the developing heart as well as in the endocardium of the left ventricle and in the endothelium of large arteries in adult mice.

It localises to the cytoplasm. The catalysed reaction is L-tyrosyl-[protein] + ATP = O-phospho-L-tyrosyl-[protein] + ADP + H(+). With respect to regulation, TEK and vascular endothelial growth factor receptor 1 (FLT1) stimulate BMX tyrosine kinase activity. Activated by integrins through the mediation of PTK2/FAK1. Activated by TNF through the mediation of TNFRSF1B. Its function is as follows. Non-receptor tyrosine kinase that plays central but diverse modulatory roles in various signaling processes involved in the regulation of actin reorganization, cell migration, cell proliferation and survival, cell adhesion, and apoptosis. Participates in signal transduction stimulated by growth factor receptors, cytokine receptors, G-protein coupled receptors, antigen receptors and integrins. Induces tyrosine phosphorylation of BCAR1 in response to integrin regulation. Activation of BMX by integrins is mediated by PTK2/FAK1, a key mediator of integrin signaling events leading to the regulation of actin cytoskeleton and cell motility. Plays a critical role in TNF-induced angiogenesis, and implicated in the signaling of TEK and FLT1 receptors, 2 important receptor families essential for angiogenesis. Required for the phosphorylation and activation of STAT3, a transcription factor involved in cell differentiation. Also involved in interleukin-6 (IL6) induced differentiation. Also plays a role in programming adaptive cytoprotection against extracellular stress in different cell systems, salivary epithelial cells, brain endothelial cells, and dermal fibroblasts. May be involved in regulation of endocytosis through its interaction with an endosomal protein RUFY1. May also play a role in the growth and differentiation of hematopoietic cells; as well as in signal transduction in endocardial and arterial endothelial cells. This Mus musculus (Mouse) protein is Cytoplasmic tyrosine-protein kinase BMX (Bmx).